The chain runs to 263 residues: Lens fiber major intrinsic protein (263 aa).

Residues Met1 to Phe9 are Cytoplasmic-facing. The helical transmembrane segment at Trp10–Gly29 threads the bilayer. Residues Ala30 to Val41 are Extracellular-facing. Residues Leu42 to Val59 form a helical membrane-spanning segment. The Cytoplasmic portion of the chain corresponds to Gly60 to His61. An intramembrane region (discontinuously helical) is located at residues Ile62–Val77. Positions Asn68–Ala70 match the NPA 1 motif. Residues Gly78–Ser82 are Cytoplasmic-facing. A helical transmembrane segment spans residues Leu83–Ser106. Topologically, residues Val107–Val127 are extracellular. A helical transmembrane segment spans residues Gly128–Thr148. At Tyr149–Arg156 the chain is on the cytoplasmic side. The helical transmembrane segment at Leu157–Gly175 threads the bilayer. The Extracellular segment spans residues Met176–Tyr178. The discontinuously helical intramembrane region spans Thr179–Ile193. The NPA 2 signature appears at Asn184–Ala186. At Leu194–Asn200 the chain is on the extracellular side. The chain crosses the membrane as a helical span at residues His201–Leu222. Residues Leu223–Leu263 are Cytoplasmic-facing. Positions Leu227 to Leu237 are interaction with CALM. Ser235 is subject to Phosphoserine. Positions Gly239 to Leu263 are disordered. Position 243 is a phosphoserine; by PKA (Ser243). Ser245 bears the Phosphoserine mark. At Asn246 the chain carries Deamidated asparagine.

This sequence belongs to the MIP/aquaporin (TC 1.A.8) family. Homotetramer; each monomer provides an independent water pore. Two homotetramers on opposing membranes can dimerize, forming a cell-cell junction. Interacts with CALM; the calcium-calmodulin/CALM complex interacts with the cytoplasmic domains of two aquaporins, leading to channel closure. Interacts with BFSP1 (via C-terminus); prevents calcium-dependent inhibition of the water channel activity. In terms of processing, fatty acylated at Met-1 and Lys-238. The acyl modifications, in decreasing order of ion abundance, are: oleoyl (C18:1) &gt; palmitoyl (C16:0) &gt; stearoyl (C18:0) &gt; eicosenoyl (C20:1) &gt; dihomo-gamma-linolenoyl (C20:3) &gt; palmitoleoyl (C16:1) &gt; eicosadienoyl (C20:2). Post-translationally, subject to partial proteolytic cleavage in the eye lens core. Partial proteolysis promotes interactions between tetramers from adjoining membranes. Major component of lens fiber junctions.

The protein resides in the cell membrane. The protein localises to the cell junction. It catalyses the reaction H2O(in) = H2O(out). Its activity is regulated as follows. The water channel activity is inhibited by calcium through calmodulin/CALM. In terms of biological role, aquaporins form homotetrameric transmembrane channels, with each monomer independently mediating water transport across the plasma membrane along its osmotic gradient. Specifically expressed in lens fiber cells, this aquaporin is crucial for maintaining lens water homeostasis and transparency. Beyond water permeability, it also acts as a cell-to-cell adhesion molecule, forming thin junctions between lens fiber cells that are essential for maintaining the ordered structure and transparency of the lens. This chain is Lens fiber major intrinsic protein, found in Bos taurus (Bovine).